A 10061-amino-acid chain; its full sequence is MATH and LRR domain-containing protein PFE0570w (10061 aa).

Disordered regions lie at residues 166–210 (DMDN…EKKN), 244–471 (NNSD…NDIN), and 1004–1170 (DDQK…DTSF). Residues 169–179 (NNPNNHVSNNG) show a composition bias toward polar residues. The segment covering 193–205 (TSNSIHKNNNTNI) has biased composition (low complexity). Residues 270 to 282 (KKSDNNNDKKNDD) are compositionally biased toward basic and acidic residues. Over residues 285–320 (NNNNNNNNNNNNNNNNNDNHVCTSNNQPNTINKQNN) the composition is skewed to low complexity. A compositionally biased stretch (polar residues) spans 328–338 (DQNGRTKITPQ). Residues 338–366 (QNVNQKEKEIKNVVKEKNNFNREEKDITN) adopt a coiled-coil conformation. A compositionally biased stretch (basic and acidic residues) spans 342–365 (QKEKEIKNVVKEKNNFNREEKDIT). The span at 366-375 (NSDDYDENST) shows a compositional bias: acidic residues. 2 stretches are compositionally biased toward polar residues: residues 376–389 (DESC…TSSE) and 421–437 (VPSN…SAEN). Residues 431 to 469 (NVKSAENCNKEKKKKKKKKKKELNNDNKDNTLNNETMND) adopt a coiled-coil conformation. Positions 441–451 (EKKKKKKKKKK) are enriched in basic residues. The span at 460 to 471 (NTLNNETMNDIN) shows a compositional bias: low complexity. Positions 1025-1037 (NEEKPNVNKEGNI) are enriched in basic and acidic residues. A compositionally biased stretch (low complexity) spans 1047–1057 (NKNKNNNNNNN). Residues 1058 to 1132 (DKNDKNDKND…KKKKNGKEQN (75 aa)) are compositionally biased toward basic and acidic residues. Over residues 1133–1165 (EDSTESDDESSVIDDNYIDDDSCDCDSESDSID) the composition is skewed to acidic residues. The MATH domain maps to 1328 to 1458 (NGKIELYIPN…SGGLLIKGKV (131 aa)). The tract at residues 1651–1698 (GGNLQNEQKGDEDVKKEDVKKENVNKEEIKNGNNNNNNDENENEVDDN) is disordered. Residues 1658–1680 (QKGDEDVKKEDVKKENVNKEEIK) are compositionally biased toward basic and acidic residues. The stretch at 1916-1948 (NYLSNLNKVKININDLNNNIVDVNNSIHNIEKE) forms a coiled coil. The span at 1973–1995 (HKETSSIQNKGKEKSNNNIKSDD) shows a compositional bias: basic and acidic residues. 4 disordered regions span residues 1973-1998 (HKET…DNNN), 2155-2245 (LNKS…PSYK), 2427-2566 (YSDD…NNIK), and 3120-3139 (SNET…NEMK). Positions 2216-2228 (NNDDKDDDDDDSY) are enriched in acidic residues. A compositionally biased stretch (basic and acidic residues) spans 2235 to 2245 (SDGKKNDPSYK). Residues 2475-2484 (NNNNNNNNMM) are compositionally biased toward low complexity. Basic and acidic residues-rich tracts occupy residues 2487–2496 (DDNKVNKNEE) and 2505–2527 (QIKE…RNED). Low complexity-rich tracts occupy residues 2552-2564 (NNNN…NNNN) and 3121-3133 (NETN…NRTN). Positions 2555-2580 (NNNNNNNNNNIKRLDDSYNKLLKNKN) form a coiled coil. A helical transmembrane segment spans residues 3398–3418 (KLILKKIFMYLNIICMIIKYI). Disordered regions lie at residues 3802–3826 (STND…YSKK), 3847–3890 (LTSG…DNNN), and 3919–3953 (ESND…EKKS). The span at 3809–3822 (VDRSDDSESNDDKK) shows a compositional bias: basic and acidic residues. Positions 3851–3890 (NSSSKNSKKNSNNESIQMDNTNNSNSNNNNKNDNNNDNNN) are enriched in low complexity. Residues 3926–3941 (KNQNIQSNEQSVTPNR) are compositionally biased toward polar residues. A compositionally biased stretch (basic and acidic residues) spans 3942–3953 (NIEENKDHEKKS). The stretch at 3977-4001 (EHLGNATAVLNILQKKLENEELKKL) forms a coiled coil. The segment covering 4039 to 4065 (VSAHKEKNVKTDSSDDKKKKEDNENNN) has biased composition (basic and acidic residues). 6 disordered regions span residues 4039–4074 (VSAH…IIHN), 4155–4180 (KGNN…NNMG), 4352–4414 (SNNN…NNNN), 4919–4943 (NKRK…DNDN), 4991–5030 (DGLN…KNEK), and 5179–5207 (SKIA…KSNL). Residues 4157-4178 (NNSKDNNNNNNNNNNNNNNKNN) are compositionally biased toward low complexity. Residues 4399 to 4424 (NNNNNNNNNNNNNNNNVNKEIIKLNS) are a coiled coil. Low complexity-rich tracts occupy residues 4929–4943 (NNNN…DNDN), 5004–5019 (NMNN…NNSN), and 5185–5202 (NGNN…NNNN). A coiled-coil region spans residues 5006–5046 (NNVKNKNNNNNNSNNKRKKNEKNEKIDKIEQFLHESELEKD). Coiled-coil stretches lie at residues 5486 to 5563 (NNNN…NIYE), 5728 to 5810 (DVLK…DKEE), and 5900 to 6022 (MNND…INNY). 3 stretches are compositionally biased toward basic and acidic residues: residues 5716–5732 (KDAK…VLKD), 5738–5811 (SNKE…KEEP), and 5909–5953 (NKNK…KKDN). Disordered stretches follow at residues 5716–5816 (KDAK…QINE), 5892–6009 (EIIN…KKLK), 6123–6142 (KSET…VDGK), 6299–6338 (NDSI…DKGE), 6722–6760 (NMNN…NNNI), 7585–7730 (EDML…VEEK), and 7744–7787 (DLLS…KKSS). Low complexity predominate over residues 5954–5968 (NNSNNNNNNNNLSNN). Over residues 5969–5978 (GEEDPNDSDS) the composition is skewed to acidic residues. The segment covering 5991–6003 (NKNINDDSDDNNK) has biased composition (basic and acidic residues). Residues 6129 to 6138 (SNKNVESNDN) show a composition bias toward polar residues. 2 stretches are compositionally biased toward low complexity: residues 6314 to 6333 (SNSN…NNNN) and 6722 to 6759 (NMNN…NNNN). Residues 6719–6743 (NMNNMNNNNNNNNNNNNNNNNNNNN) adopt a coiled-coil conformation. The span at 7585-7599 (EDMLHSKKTDVIQHG) shows a compositional bias: basic and acidic residues. The segment covering 7600–7685 (DEEEDDEEDD…EHINEEEQED (86 aa)) has biased composition (acidic residues). Coiled coils occupy residues 7601-7637 (EEED…DIED), 7710-7813 (NTKI…NKNE), 7934-7961 (KTDE…IDNE), and 8217-8241 (NINN…GKRE). Residues 7749-7765 (SKKKNHKDKRNASKNKN) are compositionally biased toward basic residues. A compositionally biased stretch (basic and acidic residues) spans 7766–7786 (KNKDILKKNENNINDEKEKKS). 3 disordered regions span residues 8189 to 8252 (ETGG…GGEE), 8293 to 8380 (GKVS…IIMS), and 8474 to 8497 (KKKN…MDEE). A compositionally biased stretch (basic and acidic residues) spans 8218–8242 (INNKEKETNKNEEQQQGEAEGKREG). The span at 8243–8252 (EGEEGEGGEE) shows a compositional bias: acidic residues. Basic and acidic residues predominate over residues 8305–8314 (LLNDKEHEKD). Residues 8315–8363 (NEDNDEDNDEDDDDEDDDEDDEDDDDDDDDDDDDDDDDDYDEDYDEDYD) are compositionally biased toward acidic residues. Basic and acidic residues predominate over residues 8364-8374 (EKLVENKKNER). A compositionally biased stretch (low complexity) spans 8478–8492 (YSNNNIYNNNSSNKV). Coiled coils occupy residues 8644–8697 (SETL…ELNN), 8882–8907 (QYLE…VDNY), and 9219–9247 (IDMK…SNNN). Disordered stretches follow at residues 9759–9779 (TIPR…NNNS), 9891–9926 (SNTS…SSSN), and 9985–10061 (KNNS…NNIY). Low complexity-rich tracts occupy residues 9764-9779 (NTTT…NNNS), 9899-9926 (NSSN…SSSN), and 9986-10022 (NNSI…NNNT). Residues 10031-10041 (IFQQNQNHSDT) are compositionally biased toward polar residues. The segment covering 10042-10061 (NNNNNNNNKNNSNNNNNNIY) has biased composition (low complexity).

Its subcellular location is the membrane. This Plasmodium falciparum (isolate 3D7) protein is MATH and LRR domain-containing protein PFE0570w.